Consider the following 444-residue polypeptide: tRNA modification GTPase MnmE (444 aa).

(6S)-5-formyl-5,6,7,8-tetrahydrofolate-binding residues include Arg-24, Glu-81, and Lys-121. The 151-residue stretch at 218-368 (GLTVVIAGPP…LLDALVGFAR (151 aa)) folds into the TrmE-type G domain. Residues 228–233 (NAGKST), 247–253 (SPQAGTT), 272–275 (DTAG), and 349–351 (SAR) each bind GTP. Mg(2+) contacts are provided by Ser-232 and Thr-253. Residue Lys-444 participates in (6S)-5-formyl-5,6,7,8-tetrahydrofolate binding.

It belongs to the TRAFAC class TrmE-Era-EngA-EngB-Septin-like GTPase superfamily. TrmE GTPase family. Homodimer. Heterotetramer of two MnmE and two MnmG subunits. K(+) is required as a cofactor.

It is found in the cytoplasm. Its function is as follows. Exhibits a very high intrinsic GTPase hydrolysis rate. Involved in the addition of a carboxymethylaminomethyl (cmnm) group at the wobble position (U34) of certain tRNAs, forming tRNA-cmnm(5)s(2)U34. This Bradyrhizobium sp. (strain ORS 278) protein is tRNA modification GTPase MnmE.